Consider the following 439-residue polypeptide: Ribosomal protein uS12 methylthiotransferase RimO (439 aa).

The 111-residue stretch at 6–116 (GKVGFVSLGC…VMNQVHQVAP (111 aa)) folds into the MTTase N-terminal domain. Residues Cys15, Cys51, Cys80, Cys148, Cys152, and Cys155 each contribute to the [4Fe-4S] cluster site. The Radical SAM core domain maps to 134-371 (LTPKHYAYLK…MEVQQRISAS (238 aa)). In terms of domain architecture, TRAM spans 374–439 (QAKIGKRMDV…DEYDLWGRPV (66 aa)).

It belongs to the methylthiotransferase family. RimO subfamily. [4Fe-4S] cluster serves as cofactor.

Its subcellular location is the cytoplasm. It carries out the reaction L-aspartate(89)-[ribosomal protein uS12]-hydrogen + (sulfur carrier)-SH + AH2 + 2 S-adenosyl-L-methionine = 3-methylsulfanyl-L-aspartate(89)-[ribosomal protein uS12]-hydrogen + (sulfur carrier)-H + 5'-deoxyadenosine + L-methionine + A + S-adenosyl-L-homocysteine + 2 H(+). In terms of biological role, catalyzes the methylthiolation of an aspartic acid residue of ribosomal protein uS12. This Hahella chejuensis (strain KCTC 2396) protein is Ribosomal protein uS12 methylthiotransferase RimO.